Reading from the N-terminus, the 354-residue chain is Chorismate synthase (354 aa).

Arg-48 provides a ligand contact to NADP(+). FMN-binding positions include 125 to 127, 239 to 240, Gly-280, 295 to 299, and Arg-321; these read RSS, NA, and KPVAT.

Belongs to the chorismate synthase family. In terms of assembly, homotetramer. Requires FMNH2 as cofactor.

It carries out the reaction 5-O-(1-carboxyvinyl)-3-phosphoshikimate = chorismate + phosphate. It functions in the pathway metabolic intermediate biosynthesis; chorismate biosynthesis; chorismate from D-erythrose 4-phosphate and phosphoenolpyruvate: step 7/7. Functionally, catalyzes the anti-1,4-elimination of the C-3 phosphate and the C-6 proR hydrogen from 5-enolpyruvylshikimate-3-phosphate (EPSP) to yield chorismate, which is the branch point compound that serves as the starting substrate for the three terminal pathways of aromatic amino acid biosynthesis. This reaction introduces a second double bond into the aromatic ring system. This is Chorismate synthase from Christiangramia forsetii (strain DSM 17595 / CGMCC 1.15422 / KT0803) (Gramella forsetii).